A 223-amino-acid polypeptide reads, in one-letter code: UPF0173 metal-dependent hydrolase THA_544 (223 aa).

The protein belongs to the UPF0173 family.

The sequence is that of UPF0173 metal-dependent hydrolase THA_544 from Thermosipho africanus (strain TCF52B).